Reading from the N-terminus, the 492-residue chain is ATP synthase subunit beta, chloroplastic (492 aa).

G170–T177 lines the ATP pocket.

This sequence belongs to the ATPase alpha/beta chains family. F-type ATPases have 2 components, CF(1) - the catalytic core - and CF(0) - the membrane proton channel. CF(1) has five subunits: alpha(3), beta(3), gamma(1), delta(1), epsilon(1). CF(0) has four main subunits: a(1), b(1), b'(1) and c(9-12).

It localises to the plastid. The protein resides in the chloroplast thylakoid membrane. The enzyme catalyses ATP + H2O + 4 H(+)(in) = ADP + phosphate + 5 H(+)(out). Its function is as follows. Produces ATP from ADP in the presence of a proton gradient across the membrane. The catalytic sites are hosted primarily by the beta subunits. The polypeptide is ATP synthase subunit beta, chloroplastic (Huperzia lucidula (Shining clubmoss)).